Consider the following 161-residue polypeptide: Allophycocyanin alpha chain (161 aa).

An N4-methylasparagine modification is found at N71. C81 lines the (2R,3E)-phycocyanobilin pocket.

Belongs to the phycobiliprotein family. As to quaternary structure, heterodimer of an alpha and a beta chain. Post-translationally, contains one covalently linked phycocyanobilin chromophore.

It is found in the plastid. It localises to the cyanelle thylakoid membrane. Light-harvesting photosynthetic bile pigment-protein from the phycobiliprotein complex. Allophycocyanin has a maximum absorption at approximately 650 nanometers. In Cyanophora paradoxa, this protein is Allophycocyanin alpha chain (apcA).